The following is a 72-amino-acid chain: MPKEEVLEFPGVVTELLPNAMFRVKLENDHEIIAHTAGRMRKNRIRVLTGDKVLVEMTPYDLTKGRITYRFK.

Residues 1–72 (MPKEEVLEFP…TKGRITYRFK (72 aa)) enclose the S1-like domain.

Belongs to the IF-1 family. As to quaternary structure, component of the 30S ribosomal translation pre-initiation complex which assembles on the 30S ribosome in the order IF-2 and IF-3, IF-1 and N-formylmethionyl-tRNA(fMet); mRNA recruitment can occur at any time during PIC assembly.

The protein localises to the cytoplasm. One of the essential components for the initiation of protein synthesis. Stabilizes the binding of IF-2 and IF-3 on the 30S subunit to which N-formylmethionyl-tRNA(fMet) subsequently binds. Helps modulate mRNA selection, yielding the 30S pre-initiation complex (PIC). Upon addition of the 50S ribosomal subunit IF-1, IF-2 and IF-3 are released leaving the mature 70S translation initiation complex. This Chelativorans sp. (strain BNC1) protein is Translation initiation factor IF-1.